The chain runs to 126 residues: uncharacterized protein (126 aa).

Residues 1-27 (MSKSKTPNFDDMEVLDDTNDEYDDSES) are disordered. Positions 10–27 (DDMEVLDDTNDEYDDSES) are enriched in acidic residues.

This is an uncharacterized protein from Halorubrum sp. PV6 (HRPV-1).